The sequence spans 131 residues: Large ribosomal subunit protein uL18 (131 aa).

Belongs to the universal ribosomal protein uL18 family. Part of the 50S ribosomal subunit; part of the 5S rRNA/L5/L18/L25 subcomplex. Contacts the 5S and 23S rRNAs.

This is one of the proteins that bind and probably mediate the attachment of the 5S RNA into the large ribosomal subunit, where it forms part of the central protuberance. The polypeptide is Large ribosomal subunit protein uL18 (Corynebacterium kroppenstedtii (strain DSM 44385 / JCM 11950 / CIP 105744 / CCUG 35717)).